Consider the following 238-residue polypeptide: Pyridoxine 5'-phosphate synthase (238 aa).

Residues Asn-7 and Arg-18 each coordinate 3-amino-2-oxopropyl phosphate. The active-site Proton acceptor is the His-43. 2 residues coordinate 1-deoxy-D-xylulose 5-phosphate: Arg-45 and His-50. Residue Glu-70 is the Proton acceptor of the active site. Residue Thr-100 coordinates 1-deoxy-D-xylulose 5-phosphate. The active-site Proton donor is His-190. Residues Asp-191 and 213–214 (GH) contribute to the 3-amino-2-oxopropyl phosphate site.

This sequence belongs to the PNP synthase family. As to quaternary structure, homooctamer; tetramer of dimers.

Its subcellular location is the cytoplasm. It catalyses the reaction 3-amino-2-oxopropyl phosphate + 1-deoxy-D-xylulose 5-phosphate = pyridoxine 5'-phosphate + phosphate + 2 H2O + H(+). It participates in cofactor biosynthesis; pyridoxine 5'-phosphate biosynthesis; pyridoxine 5'-phosphate from D-erythrose 4-phosphate: step 5/5. In terms of biological role, catalyzes the complicated ring closure reaction between the two acyclic compounds 1-deoxy-D-xylulose-5-phosphate (DXP) and 3-amino-2-oxopropyl phosphate (1-amino-acetone-3-phosphate or AAP) to form pyridoxine 5'-phosphate (PNP) and inorganic phosphate. This Parabacteroides distasonis (strain ATCC 8503 / DSM 20701 / CIP 104284 / JCM 5825 / NCTC 11152) protein is Pyridoxine 5'-phosphate synthase.